Reading from the N-terminus, the 305-residue chain is Aquaporin-1 (305 aa).

A disordered region spans residues Met-1–Lys-34. The Cytoplasmic portion of the chain corresponds to Met-1–His-48. Residues Phe-49–Ile-69 form a helical membrane-spanning segment. At Cys-70–Leu-91 the chain is on the extracellular side. The helical transmembrane segment at Ile-92–Val-112 threads the bilayer. The Cytoplasmic portion of the chain corresponds to Ser-113–Cys-136. The NPA 1 signature appears at Asn-118–Ala-120. The chain crosses the membrane as a helical span at residues Val-137–Met-157. Topologically, residues Thr-158–Arg-176 are extracellular. Residues Gly-177 to Val-197 traverse the membrane as a helical segment. Over Glu-198–Asn-203 the chain is Cytoplasmic. Residues Phe-204–Tyr-224 form a helical membrane-spanning segment. The Extracellular segment spans residues Thr-225 to His-248. The NPA 2 motif lies at Asn-230–Ala-232. A helical membrane pass occupies residues Trp-249–Leu-269. Residues Gln-270–Val-305 lie on the Cytoplasmic side of the membrane. The span at Thr-286–Glu-295 shows a compositional bias: basic and acidic residues. The disordered stretch occupies residues Thr-286–Val-305. The span at Thr-296–Val-305 shows a compositional bias: polar residues.

This sequence belongs to the MIP/aquaporin (TC 1.A.8) family.

The protein localises to the endoplasmic reticulum membrane. Its subcellular location is the cell membrane. Its function is as follows. Water channel required to facilitate the transport of water across membranes. Involved in sporulation, freeze tolerance and osmotolerance. Is non-functional in most laboratory strains. The chain is Aquaporin-1 (AQY1) from Saccharomyces cerevisiae (strain ATCC 204508 / S288c) (Baker's yeast).